Reading from the N-terminus, the 294-residue chain is Protoheme IX farnesyltransferase (294 aa).

The next 9 helical transmembrane spans lie at 25–45 (SLVLVTAAGGMWLAPGHMGAV), 48–68 (LVTLLATAGTVGAANALNCYW), 92–112 (AVALWFGISLAAVSLPALALG), 115–135 (VLTAALGLVALLSYVLAYTPL), 141–161 (AAMLVGGVPGALPPLMGWTAV), 170–190 (FSLFAIMFLWQMPHFIAIALF), 216–236 (VVLYLVALIPMTLLPFQLHIA), 240–260 (YLAAAVLLGLSFLGLGAWGFF), and 272–292 (FFFSLIYLTGLFAALALDRVP).

The protein belongs to the UbiA prenyltransferase family. Protoheme IX farnesyltransferase subfamily.

It is found in the cell inner membrane. The catalysed reaction is heme b + (2E,6E)-farnesyl diphosphate + H2O = Fe(II)-heme o + diphosphate. Its pathway is porphyrin-containing compound metabolism; heme O biosynthesis; heme O from protoheme: step 1/1. In terms of biological role, converts heme B (protoheme IX) to heme O by substitution of the vinyl group on carbon 2 of heme B porphyrin ring with a hydroxyethyl farnesyl side group. The chain is Protoheme IX farnesyltransferase from Myxococcus xanthus (strain DK1622).